The sequence spans 315 residues: Protein LST8 homolog (315 aa).

WD repeat units follow at residues Met1–Arg31, Val33–Val71, Gly76–Ser115, Asp119–Ile158, Glu161–Met200, Ala211–Glu250, Ile253–Glu292, and Gly295–His315.

This sequence belongs to the WD repeat LST8 family.

The protein resides in the cytoplasm. This chain is Protein LST8 homolog, found in Drosophila pseudoobscura pseudoobscura (Fruit fly).